A 724-amino-acid polypeptide reads, in one-letter code: Catalase-peroxidase (724 aa).

Positions 98-226 (WHAAGTYRIA…LAAVMMGLIY (129 aa)) form a cross-link, tryptophyl-tyrosyl-methioninium (Trp-Tyr) (with M-252). The Proton acceptor role is filled by H99. Positions 226 to 252 (YVNPEGVDGNPDPLKTAHDIRVTFERM) form a cross-link, tryptophyl-tyrosyl-methioninium (Tyr-Met) (with W-98). H267 serves as a coordination point for heme b.

The protein belongs to the peroxidase family. Peroxidase/catalase subfamily. Homodimer or homotetramer. Heme b serves as cofactor. Post-translationally, formation of the three residue Trp-Tyr-Met cross-link is important for the catalase, but not the peroxidase activity of the enzyme.

The catalysed reaction is H2O2 + AH2 = A + 2 H2O. The enzyme catalyses 2 H2O2 = O2 + 2 H2O. Bifunctional enzyme with both catalase and broad-spectrum peroxidase activity. The chain is Catalase-peroxidase from Psychromonas ingrahamii (strain DSM 17664 / CCUG 51855 / 37).